A 733-amino-acid polypeptide reads, in one-letter code: Two pore calcium channel protein 1 (733 aa).

At M1 the chain carries N-acetylmethionine. The Cytoplasmic portion of the chain corresponds to 1–71; the sequence is MEDPLIGRDS…RYYFIFTRLD (71 aa). Residues 72-92 form a helical membrane-spanning segment; sequence LIWSLNYFALLFLNFFEQPLW. At 93 to 120 the chain is on the vacuolar side; that stretch reads CEKNPKPSCKDRDYYYLGELPYLTNAES. A helical transmembrane segment spans residues 121–141; it reads IIYEVITLAILLVHTFFPISY. The Cytoplasmic portion of the chain corresponds to 142–158; that stretch reads EGSRIFWTSRLNLVKVA. A helical membrane pass occupies residues 159-179; the sequence is CVVILFVDVLVDFLYLSPLAF. D180 is a topological domain (vacuolar). A helical; Voltage-sensor transmembrane segment spans residues 181-199; it reads FLPFRIAPYVRVIIFILSI. Over 200–218 the chain is Cytoplasmic; that stretch reads RELRDTLVLLSGMLGTYLN. The chain crosses the membrane as a helical span at residues 219–239; it reads ILALWMLFLLFASWIAFVMFE. At 240–245 the chain is on the vacuolar side; it reads DTQQGL. Residues 246-260 constitute an intramembrane region (pore-forming); that stretch reads TVFTSYGATLYQMFI. The Vacuolar portion of the chain corresponds to 261 to 282; it reads LFTTSNNPDVWIPAYKSSRWSS. The chain crosses the membrane as a helical span at residues 283-303; the sequence is VFFVLYVLIGVYFVTNLILAV. Residues 304–428 lie on the Cytoplasmic side of the membrane; it reads VYDSFKEQLA…LSQQLRAFVR (125 aa). EF-hand domains follow at residues 322-357 and 363-398; these read MKRRMLEKAFGLIDSDKNGEIDKNQCIKLFEQLTNY and ISKEEFGLIFDELDDTRDFKINKDEFADLCQAIALR. A helical membrane pass occupies residues 429–449; the sequence is SPNFGYAISFILIINFIAVVV. Residues 450–465 lie on the Vacuolar side of the membrane; the sequence is ETTLDIEESSAQKPWQ. Residues 466 to 486 traverse the membrane as a helical segment; the sequence is VAEFVFGWIYVLEMALKIYTY. Topologically, residues 487-498 are cytoplasmic; sequence GFENYWREGANR. A helical transmembrane segment spans residues 499 to 519; it reads FDFLVTWVIVIGETATFITPD. Residues 520-528 are Vacuolar-facing; sequence ENTFFSNGE. A helical; Voltage-sensor membrane pass occupies residues 529–546; it reads WIRYLLLARMLRLIRLLM. The Cytoplasmic portion of the chain corresponds to 547–557; sequence NVQRYRAFIAT. The chain crosses the membrane as a helical span at residues 558–578; the sequence is FITLIPSLMPYLGTIFCVLCI. The Vacuolar segment spans residues 579 to 615; the sequence is YCSIGVQVFGGLVNAGNKKLFETELAEDDYLLFNFND. Residues 616–630 constitute an intramembrane region (pore-forming); the sequence is YPNGMVTLFNLLVMG. Residues 631 to 651 are Vacuolar-facing; the sequence is NWQVWMESYKDLTGTWWSITY. A helical transmembrane segment spans residues 652–672; that stretch reads FVSFYVITILLLLNLVVAFVL. The Cytoplasmic segment spans residues 673–733; that stretch reads EAFFTELDLE…SKPECSTSDT (61 aa). Positions 686 to 695 are enriched in basic and acidic residues; it reads KCQGQDSQEK. The interval 686-711 is disordered; that stretch reads KCQGQDSQEKRNRRRSAGSKSRSQRV.

The protein belongs to the calcium channel alpha-1 subunit (TC 1.A.1.11) family. Two pore calcium channel subfamily. In terms of assembly, homodimer. In terms of tissue distribution, ubiquitously expressed.

The protein resides in the vacuole membrane. Its activity is regulated as follows. Inhibited by Al(3+). Its function is as follows. Functions as a voltage-gated inward-rectifying Ca(2+) channel (VDCC) across the vacuole membrane. Is one of the essential components of the slow vacuolar (SV) channel. Acts as the major ROS-responsive Ca(2+) channel and is the possible target of Al-dependent inhibition. Involved in the regulation of germination and stomatal movement. This is Two pore calcium channel protein 1 (TPC1) from Arabidopsis thaliana (Mouse-ear cress).